We begin with the raw amino-acid sequence, 217 residues long: Large ribosomal subunit protein uL3 (217 aa).

Residues 127 to 162 form a disordered region; the sequence is GFSRGPMSHGSKNHRAPGSTGAGTTPGRIYPGKRMA. The segment covering 142-153 has biased composition (low complexity); it reads APGSTGAGTTPG.

The protein belongs to the universal ribosomal protein uL3 family. Part of the 50S ribosomal subunit. Forms a cluster with proteins L14 and L19.

In terms of biological role, one of the primary rRNA binding proteins, it binds directly near the 3'-end of the 23S rRNA, where it nucleates assembly of the 50S subunit. The sequence is that of Large ribosomal subunit protein uL3 from Prochlorococcus marinus (strain AS9601).